A 25-amino-acid polypeptide reads, in one-letter code: Insulin mimetic protein (25 aa).

Residues 1–25 (TKDPELKQCKKQQKKQQQYDDDDKK) form a disordered region.

In terms of processing, glycosylated. As to expression, expressed in seed.

The polypeptide is Insulin mimetic protein (Cnidoscolus quercifolius).